Reading from the N-terminus, the 106-residue chain is UPF0145 protein Daci_3728 (106 aa).

This sequence belongs to the UPF0145 family.

This Delftia acidovorans (strain DSM 14801 / SPH-1) protein is UPF0145 protein Daci_3728.